The sequence spans 202 residues: Large ribosomal subunit protein uL18 (202 aa).

Belongs to the universal ribosomal protein uL18 family. As to quaternary structure, part of the 50S ribosomal subunit. Contacts the 5S and 23S rRNAs.

This is one of the proteins that bind and probably mediate the attachment of the 5S RNA into the large ribosomal subunit, where it forms part of the central protuberance. The sequence is that of Large ribosomal subunit protein uL18 from Methanopyrus kandleri (strain AV19 / DSM 6324 / JCM 9639 / NBRC 100938).